We begin with the raw amino-acid sequence, 393 residues long: Bifunctional enzyme Fae/Hps (393 aa).

The interval 1 to 161 (MYLIGEALVG…HEKDRAAHAV (161 aa)) is formaldehyde-activating enzyme. Catalysis depends on H17, which acts as the Proton donor. 5 residues coordinate substrate: D19, L48, K66, T68, and Q83. The interval 162 to 393 (MGFKVQRLWD…IDQFRIMTDF (232 aa)) is 3-hexulose-6-phosphate synthase.

In the N-terminal section; belongs to the formaldehyde-activating enzyme family. It in the C-terminal section; belongs to the HPS/KGPDC family. HPS subfamily.

It catalyses the reaction 5,6,7,8-tetrahydromethanopterin + formaldehyde = 5,10-methylenetetrahydromethanopterin + H2O. The catalysed reaction is D-ribulose 5-phosphate + formaldehyde = D-arabino-hex-3-ulose 6-phosphate. The protein operates within carbohydrate biosynthesis; D-ribose 5-phosphate biosynthesis. Catalyzes the condensation of formaldehyde with tetrahydromethanopterin (H(4)MPT) to 5,10-methylenetetrahydromethanopterin. Its function is as follows. Catalyzes the reversible formation of ribulose-5-phosphate and formaldehyde from 3-hexulose-6-phosphate. The chain is Bifunctional enzyme Fae/Hps from Methanoculleus marisnigri (strain ATCC 35101 / DSM 1498 / JR1).